We begin with the raw amino-acid sequence, 37 residues long: Cytochrome b6-f complex subunit 5 (37 aa).

A helical transmembrane segment spans residues Phe5–Ala25.

It belongs to the PetG family. The 4 large subunits of the cytochrome b6-f complex are cytochrome b6, subunit IV (17 kDa polypeptide, PetD), cytochrome f and the Rieske protein, while the 4 small subunits are PetG, PetL, PetM and PetN. The complex functions as a dimer.

The protein localises to the plastid. It is found in the chloroplast thylakoid membrane. Component of the cytochrome b6-f complex, which mediates electron transfer between photosystem II (PSII) and photosystem I (PSI), cyclic electron flow around PSI, and state transitions. PetG is required for either the stability or assembly of the cytochrome b6-f complex. The protein is Cytochrome b6-f complex subunit 5 of Capsella bursa-pastoris (Shepherd's purse).